Here is a 336-residue protein sequence, read N- to C-terminus: MNSPALQDCVRDWGELQENYQDIQETHRLYKQKLEELAKLQTRCSGTIARQKKKLKELSVELKKYKSSVKNVEEEEEQISVLNNQIRIREKTFFEMESFLPKKNGLYLSLVLGNVNVTLLSKQSKFAYKDEYEKFKLYLTMILMVLSFICRFVLNSRVTDAVFNFLLVWYYCTLTIRESILINNGSRIKGWWVLNHYISTFLSGVMLTWPDGLMYQMFRNQFLSFSMYQSFVQFLQYYYQSGCLYRLRALGERHNMDLTVEGFQSWMWRGLTFLLPFLFFGQFWQLYNAITLFKLARHPECKEWQVIMCGLPFLVHFLGNFFTTLRVVHQKFQKQN.

The Cytoplasmic segment spans residues methionine 1 to glutamate 131. Lysine 129 contributes to the CoA binding site. The chain crosses the membrane as a helical span at residues tyrosine 132–arginine 151. At phenylalanine 152–arginine 157 the chain is on the extracellular side. The chain crosses the membrane as a helical span at residues valine 158 to isoleucine 176. At arginine 177–lysine 189 the chain is on the cytoplasmic side. CoA is bound by residues serine 186 and arginine 187. A helical membrane pass occupies residues glycine 190–threonine 208. Over tryptophan 209–methionine 217 the chain is Extracellular. A helical membrane pass occupies residues phenylalanine 218 to tyrosine 239. Positions 236, 239, and 240 each coordinate CoA. The Cytoplasmic segment spans residues glutamine 240–arginine 269. A helical transmembrane segment spans residues glycine 270–phenylalanine 293. Residues lysine 294–glutamate 303 lie on the Extracellular side of the membrane. A helical transmembrane segment spans residues tryptophan 304–histidine 329. At glutamine 330–asparagine 336 the chain is on the cytoplasmic side. Lysine 331 contacts CoA.

Belongs to the TMEM120 family. As to quaternary structure, homodimer.

The protein localises to the cell membrane. It localises to the nucleus inner membrane. Its subcellular location is the endoplasmic reticulum. In terms of biological role, multifunctional protein involved in mechanosensation, and plays an essential role in lipid metabolism. May function as a potential ion channel involved in sensing mechanical stimuli. TMEM120A is structurally similar to a lipid-modifying enzyme, ELOVL7, and contains a bound coenzyme A molecule, which suggests it might function as an enzyme in lipid metabolism. This is Transmembrane protein 120A from Xenopus tropicalis (Western clawed frog).